Reading from the N-terminus, the 36-residue chain is MSDIN-like toxin proprotein 10 (36 aa).

Positions 1–10 are excised as a propeptide; that stretch reads MSDINATRLP. The segment at residues 11 to 19 is a cross-link (cyclopeptide (Gly-Pro)); sequence GAYPPVPMP. A propeptide spanning residues 20-36 is cleaved from the precursor; the sequence is CVGDADNFTLTRGENLC.

The protein belongs to the MSDIN fungal toxin family. Post-translationally, processed by the macrocyclase-peptidase enzyme POPB to yield a toxic cyclic nonapeptide. POPB first removes 10 residues from the N-terminus. Conformational trapping of the remaining peptide forces the enzyme to release this intermediate rather than proceed to macrocyclization. The enzyme rebinds the remaining peptide in a different conformation and catalyzes macrocyclization of the N-terminal 9 residues.

In terms of biological role, probable toxin that belongs to the MSDIN-like toxin family responsible for a large number of food poisoning cases and deaths. The chain is MSDIN-like toxin proprotein 10 from Amanita bisporigera (Destroying angel).